Reading from the N-terminus, the 336-residue chain is Fructose-1,6-bisphosphatase class 1 (336 aa).

Residues Glu90, Asp112, Leu114, and Asp115 each contribute to the Mg(2+) site. Residues 115 to 118 (DGSS), Asn211, and Lys277 contribute to the substrate site. Mg(2+) is bound at residue Glu283.

The protein belongs to the FBPase class 1 family. As to quaternary structure, homotetramer. The cofactor is Mg(2+).

It localises to the cytoplasm. The catalysed reaction is beta-D-fructose 1,6-bisphosphate + H2O = beta-D-fructose 6-phosphate + phosphate. It participates in carbohydrate biosynthesis; gluconeogenesis. This Pseudomonas putida (strain ATCC 700007 / DSM 6899 / JCM 31910 / BCRC 17059 / LMG 24140 / F1) protein is Fructose-1,6-bisphosphatase class 1.